Reading from the N-terminus, the 340-residue chain is GTP 3',8-cyclase (340 aa).

Residues 20–246 enclose the Radical SAM core domain; it reads RFERQYVYLR…PKALSDGPAK (227 aa). Arginine 29 contacts GTP. The [4Fe-4S] cluster site is built by cysteine 36 and cysteine 40. Tyrosine 42 lines the S-adenosyl-L-methionine pocket. Cysteine 43 provides a ligand contact to [4Fe-4S] cluster. Arginine 79 contributes to the GTP binding site. Glycine 83 is a binding site for S-adenosyl-L-methionine. Threonine 110 contributes to the GTP binding site. Serine 134 is a binding site for S-adenosyl-L-methionine. A GTP-binding site is contributed by lysine 171. Methionine 205 contacts S-adenosyl-L-methionine. Positions 268 and 271 each coordinate [4Fe-4S] cluster. GTP is bound at residue 273-275; it reads RLR. Position 285 (cysteine 285) interacts with [4Fe-4S] cluster.

This sequence belongs to the radical SAM superfamily. MoaA family. In terms of assembly, monomer and homodimer. [4Fe-4S] cluster is required as a cofactor.

The enzyme catalyses GTP + AH2 + S-adenosyl-L-methionine = (8S)-3',8-cyclo-7,8-dihydroguanosine 5'-triphosphate + 5'-deoxyadenosine + L-methionine + A + H(+). The protein operates within cofactor biosynthesis; molybdopterin biosynthesis. In terms of biological role, catalyzes the cyclization of GTP to (8S)-3',8-cyclo-7,8-dihydroguanosine 5'-triphosphate. The protein is GTP 3',8-cyclase of Actinobacillus pleuropneumoniae serotype 5b (strain L20).